The following is a 234-amino-acid chain: Large ribosomal subunit protein uL1 (234 aa).

Belongs to the universal ribosomal protein uL1 family. In terms of assembly, part of the 50S ribosomal subunit.

Functionally, binds directly to 23S rRNA. The L1 stalk is quite mobile in the ribosome, and is involved in E site tRNA release. In terms of biological role, protein L1 is also a translational repressor protein, it controls the translation of the L11 operon by binding to its mRNA. The sequence is that of Large ribosomal subunit protein uL1 from Salmonella agona (strain SL483).